Reading from the N-terminus, the 146-residue chain is Small ribosomal subunit protein uS13 (146 aa).

The tract at residues 119–146 (ARGKKVRGQRTRSTGRKGRTVGVVRRKR) is disordered.

Belongs to the universal ribosomal protein uS13 family. Part of the 30S ribosomal subunit. Forms a loose heterodimer with protein S19. Forms two bridges to the 50S subunit in the 70S ribosome.

Its function is as follows. Located at the top of the head of the 30S subunit, it contacts several helices of the 16S rRNA. In the 70S ribosome it contacts the 23S rRNA (bridge B1a) and protein L5 of the 50S subunit (bridge B1b), connecting the 2 subunits; these bridges are implicated in subunit movement. This is Small ribosomal subunit protein uS13 from Archaeoglobus fulgidus (strain ATCC 49558 / DSM 4304 / JCM 9628 / NBRC 100126 / VC-16).